A 65-amino-acid polypeptide reads, in one-letter code: Large ribosomal subunit protein bL35 (65 aa).

The segment at 1–26 (MPKIKTLRSAAKRFKKTESGKFKRKQ) is disordered.

The protein belongs to the bacterial ribosomal protein bL35 family.

This Buchnera aphidicola subsp. Baizongia pistaciae (strain Bp) protein is Large ribosomal subunit protein bL35.